We begin with the raw amino-acid sequence, 450 residues long: Probable glycine dehydrogenase (decarboxylating) subunit 1 (450 aa).

This sequence belongs to the GcvP family. N-terminal subunit subfamily. The glycine cleavage system is composed of four proteins: P, T, L and H. In this organism, the P 'protein' is a heterodimer of two subunits.

The enzyme catalyses N(6)-[(R)-lipoyl]-L-lysyl-[glycine-cleavage complex H protein] + glycine + H(+) = N(6)-[(R)-S(8)-aminomethyldihydrolipoyl]-L-lysyl-[glycine-cleavage complex H protein] + CO2. The glycine cleavage system catalyzes the degradation of glycine. The P protein binds the alpha-amino group of glycine through its pyridoxal phosphate cofactor; CO(2) is released and the remaining methylamine moiety is then transferred to the lipoamide cofactor of the H protein. The polypeptide is Probable glycine dehydrogenase (decarboxylating) subunit 1 (Desulfotalea psychrophila (strain LSv54 / DSM 12343)).